Here is a 111-residue protein sequence, read N- to C-terminus: Cytochrome c (111 aa).

A1 is subject to N-acetylalanine. Heme c contacts are provided by C22, C25, and H26. The residue at position 80 (K80) is an N6,N6,N6-trimethyllysine. Residue M88 coordinates heme c. An N6,N6,N6-trimethyllysine modification is found at K94.

The protein belongs to the cytochrome c family. Post-translationally, binds 1 heme c group covalently per subunit.

It localises to the mitochondrion intermembrane space. Electron carrier protein. The oxidized form of the cytochrome c heme group can accept an electron from the heme group of the cytochrome c1 subunit of cytochrome reductase. Cytochrome c then transfers this electron to the cytochrome oxidase complex, the final protein carrier in the mitochondrial electron-transport chain. This chain is Cytochrome c, found in Vigna radiata var. radiata (Mung bean).